Reading from the N-terminus, the 376-residue chain is Heat-inducible transcription repressor HrcA (376 aa).

The protein belongs to the HrcA family.

Negative regulator of class I heat shock genes (grpE-dnaK-dnaJ and groELS operons). Prevents heat-shock induction of these operons. This is Heat-inducible transcription repressor HrcA from Chloroflexus aggregans (strain MD-66 / DSM 9485).